Reading from the N-terminus, the 512-residue chain is Glutathione-binding protein GsiB (512 aa).

Positions 1–26 (MARAVHRSGLVALGIATALMASCAFA) are cleaved as a signal peptide.

It belongs to the bacterial solute-binding protein 5 family. The complex is composed of two ATP-binding proteins (GsiA), two transmembrane proteins (GsiC and GsiD) and a solute-binding protein (GsiB). In the presence of glutathione, interacts with the transmembrane proteins GsiC and GsiD.

The protein resides in the periplasm. Part of the ABC transporter complex GsiABCD involved in glutathione import. Binds glutathione. The chain is Glutathione-binding protein GsiB from Escherichia coli (strain K12).